A 230-amino-acid polypeptide reads, in one-letter code: Cytochrome c oxidase subunit 2 (230 aa).

Over 1–14 (MAHPSQLGFQDAAS) the chain is Mitochondrial intermembrane. The helical transmembrane segment at 15–45 (PVMEELLHFHDHALMIVLLISTLVLYIIVAM) threads the bilayer. At 46–59 (VSTKLTNKYILDSQ) the chain is on the mitochondrial matrix side. The helical transmembrane segment at 60 to 87 (EIEIVWTVLPAVILILIALPSLRILYLM) threads the bilayer. Over 88–230 (DEINDPHLTI…KWSTMMLEDA (143 aa)) the chain is Mitochondrial intermembrane. His161, Cys196, Glu198, Cys200, His204, and Met207 together coordinate Cu cation. Glu198 lines the Mg(2+) pocket.

This sequence belongs to the cytochrome c oxidase subunit 2 family. As to quaternary structure, component of the cytochrome c oxidase (complex IV, CIV), a multisubunit enzyme composed of 14 subunits. The complex is composed of a catalytic core of 3 subunits MT-CO1, MT-CO2 and MT-CO3, encoded in the mitochondrial DNA, and 11 supernumerary subunits COX4I, COX5A, COX5B, COX6A, COX6B, COX6C, COX7A, COX7B, COX7C, COX8 and NDUFA4, which are encoded in the nuclear genome. The complex exists as a monomer or a dimer and forms supercomplexes (SCs) in the inner mitochondrial membrane with NADH-ubiquinone oxidoreductase (complex I, CI) and ubiquinol-cytochrome c oxidoreductase (cytochrome b-c1 complex, complex III, CIII), resulting in different assemblies (supercomplex SCI(1)III(2)IV(1) and megacomplex MCI(2)III(2)IV(2)). Found in a complex with TMEM177, COA6, COX18, COX20, SCO1 and SCO2. Interacts with TMEM177 in a COX20-dependent manner. Interacts with COX20. Interacts with COX16. It depends on Cu cation as a cofactor.

It localises to the mitochondrion inner membrane. The catalysed reaction is 4 Fe(II)-[cytochrome c] + O2 + 8 H(+)(in) = 4 Fe(III)-[cytochrome c] + 2 H2O + 4 H(+)(out). Component of the cytochrome c oxidase, the last enzyme in the mitochondrial electron transport chain which drives oxidative phosphorylation. The respiratory chain contains 3 multisubunit complexes succinate dehydrogenase (complex II, CII), ubiquinol-cytochrome c oxidoreductase (cytochrome b-c1 complex, complex III, CIII) and cytochrome c oxidase (complex IV, CIV), that cooperate to transfer electrons derived from NADH and succinate to molecular oxygen, creating an electrochemical gradient over the inner membrane that drives transmembrane transport and the ATP synthase. Cytochrome c oxidase is the component of the respiratory chain that catalyzes the reduction of oxygen to water. Electrons originating from reduced cytochrome c in the intermembrane space (IMS) are transferred via the dinuclear copper A center (CU(A)) of subunit 2 and heme A of subunit 1 to the active site in subunit 1, a binuclear center (BNC) formed by heme A3 and copper B (CU(B)). The BNC reduces molecular oxygen to 2 water molecules using 4 electrons from cytochrome c in the IMS and 4 protons from the mitochondrial matrix. In Salmo salar (Atlantic salmon), this protein is Cytochrome c oxidase subunit 2 (mt-co2).